The primary structure comprises 668 residues: Type II methyltransferase M.MwoI (668 aa).

This sequence belongs to the N(4)/N(6)-methyltransferase family. N(4) subfamily.

The catalysed reaction is a 2'-deoxycytidine in DNA + S-adenosyl-L-methionine = an N(4)-methyl-2'-deoxycytidine in DNA + S-adenosyl-L-homocysteine + H(+). In terms of biological role, a beta subtype methylase, recognizes the double-stranded DNA sequence 5'-GCNNNNNNNGC-3', methylates C-2 on both strands, and protects the DNA from cleavage by the MwoI endonuclease. This chain is Type II methyltransferase M.MwoI, found in Methanothermobacter wolfeii (Methanobacterium wolfei).